A 310-amino-acid polypeptide reads, in one-letter code: N-acetylmuramic acid 6-phosphate etherase (310 aa).

One can recognise an SIS domain in the interval 64 to 227 (ITARLKSKGR…STSVMIKLGK (164 aa)). Catalysis depends on glutamate 92, which acts as the Proton donor. Glutamate 123 is a catalytic residue.

It belongs to the GCKR-like family. MurNAc-6-P etherase subfamily. Homodimer.

The enzyme catalyses N-acetyl-D-muramate 6-phosphate + H2O = N-acetyl-D-glucosamine 6-phosphate + (R)-lactate. The protein operates within amino-sugar metabolism; N-acetylmuramate degradation. Functionally, specifically catalyzes the cleavage of the D-lactyl ether substituent of MurNAc 6-phosphate, producing GlcNAc 6-phosphate and D-lactate. In Prochlorococcus marinus (strain NATL1A), this protein is N-acetylmuramic acid 6-phosphate etherase.